Reading from the N-terminus, the 340-residue chain is Ferrochelatase (340 aa).

His-189 and Glu-292 together coordinate Fe cation.

This sequence belongs to the ferrochelatase family.

The protein resides in the cytoplasm. It catalyses the reaction heme b + 2 H(+) = protoporphyrin IX + Fe(2+). It participates in porphyrin-containing compound metabolism; protoheme biosynthesis; protoheme from protoporphyrin-IX: step 1/1. In terms of biological role, catalyzes the ferrous insertion into protoporphyrin IX. The polypeptide is Ferrochelatase (Pseudomonas fluorescens biotype C).